Here is a 107-residue protein sequence, read N- to C-terminus: Large ribosomal subunit protein bL21 (107 aa).

The protein belongs to the bacterial ribosomal protein bL21 family. Part of the 50S ribosomal subunit. Contacts protein L20.

Its function is as follows. This protein binds to 23S rRNA in the presence of protein L20. This is Large ribosomal subunit protein bL21 from Chlamydia muridarum (strain MoPn / Nigg).